A 98-amino-acid chain; its full sequence is Large ribosomal subunit protein bL28 (98 aa).

The protein belongs to the bacterial ribosomal protein bL28 family.

This chain is Large ribosomal subunit protein bL28, found in Phenylobacterium zucineum (strain HLK1).